The sequence spans 126 residues: Large ribosomal subunit protein bL12 (126 aa).

Belongs to the bacterial ribosomal protein bL12 family. As to quaternary structure, homodimer. Part of the ribosomal stalk of the 50S ribosomal subunit. Forms a multimeric L10(L12)X complex, where L10 forms an elongated spine to which 2 to 4 L12 dimers bind in a sequential fashion. Binds GTP-bound translation factors.

Functionally, forms part of the ribosomal stalk which helps the ribosome interact with GTP-bound translation factors. Is thus essential for accurate translation. The protein is Large ribosomal subunit protein bL12 of Saccharophagus degradans (strain 2-40 / ATCC 43961 / DSM 17024).